The chain runs to 212 residues: Ribonuclease HII (212 aa).

The RNase H type-2 domain maps to glutamine 24–glutamate 212. Residues aspartate 30, glutamate 31, and aspartate 122 each coordinate a divalent metal cation.

This sequence belongs to the RNase HII family. Mn(2+) is required as a cofactor. Mg(2+) serves as cofactor.

The protein localises to the cytoplasm. The enzyme catalyses Endonucleolytic cleavage to 5'-phosphomonoester.. Functionally, endonuclease that specifically degrades the RNA of RNA-DNA hybrids. This is Ribonuclease HII from Vibrio campbellii (strain ATCC BAA-1116).